The primary structure comprises 141 residues: Large ribosomal subunit protein uL11 (141 aa).

Belongs to the universal ribosomal protein uL11 family. Part of the ribosomal stalk of the 50S ribosomal subunit. Interacts with L10 and the large rRNA to form the base of the stalk. L10 forms an elongated spine to which L12 dimers bind in a sequential fashion forming a multimeric L10(L12)X complex. One or more lysine residues are methylated.

In terms of biological role, forms part of the ribosomal stalk which helps the ribosome interact with GTP-bound translation factors. This chain is Large ribosomal subunit protein uL11, found in Geobacillus kaustophilus (strain HTA426).